We begin with the raw amino-acid sequence, 39 residues long: Photosystem II reaction center protein L (39 aa).

Residues 18 to 38 (SLYLGLLLVFVTGVLFSSYFF) traverse the membrane as a helical segment.

The protein belongs to the PsbL family. PSII is composed of 1 copy each of membrane proteins PsbA, PsbB, PsbC, PsbD, PsbE, PsbF, PsbH, PsbI, PsbJ, PsbK, PsbL, PsbM, PsbT, PsbX, PsbY, PsbZ, Psb30/Ycf12, peripheral proteins PsbO, CyanoQ (PsbQ), PsbU, PsbV and a large number of cofactors. It forms dimeric complexes.

The protein resides in the cellular thylakoid membrane. Functionally, one of the components of the core complex of photosystem II (PSII). PSII is a light-driven water:plastoquinone oxidoreductase that uses light energy to abstract electrons from H(2)O, generating O(2) and a proton gradient subsequently used for ATP formation. It consists of a core antenna complex that captures photons, and an electron transfer chain that converts photonic excitation into a charge separation. This subunit is found at the monomer-monomer interface and is required for correct PSII assembly and/or dimerization. This chain is Photosystem II reaction center protein L, found in Synechococcus sp. (strain RCC307).